A 232-amino-acid chain; its full sequence is MSSDIHQIKIGLTDNHPCSYLPERKERVAVALEADMHTADNYEVLLANGFRRSGNTIYKPHCDSCHSCQPIRISVPDIELSRSQKRLLAKARSLSWSMKRNMDENWFDLYSRYIVARHRNGTMYPPKKDDFAHFSRNQWLTTQFLHIYEGQRLIAVAVTDIMDHCASAFYTFFEPEHELSLGTLAVLFQLEYCQEEKKQWLYLGYQIDECPAMNYKVRFHRHQKLVNQRWQG.

The protein belongs to the R-transferase family. Bpt subfamily.

Its subcellular location is the cytoplasm. It carries out the reaction N-terminal L-glutamyl-[protein] + L-leucyl-tRNA(Leu) = N-terminal L-leucyl-L-glutamyl-[protein] + tRNA(Leu) + H(+). It catalyses the reaction N-terminal L-aspartyl-[protein] + L-leucyl-tRNA(Leu) = N-terminal L-leucyl-L-aspartyl-[protein] + tRNA(Leu) + H(+). Functionally, functions in the N-end rule pathway of protein degradation where it conjugates Leu from its aminoacyl-tRNA to the N-termini of proteins containing an N-terminal aspartate or glutamate. The protein is Aspartate/glutamate leucyltransferase of Vibrio vulnificus (strain YJ016).